The following is a 268-amino-acid chain: Indole-3-glycerol phosphate synthase 2 (268 aa).

This sequence belongs to the TrpC family.

It carries out the reaction 1-(2-carboxyphenylamino)-1-deoxy-D-ribulose 5-phosphate + H(+) = (1S,2R)-1-C-(indol-3-yl)glycerol 3-phosphate + CO2 + H2O. It participates in amino-acid biosynthesis; L-tryptophan biosynthesis; L-tryptophan from chorismate: step 4/5. The sequence is that of Indole-3-glycerol phosphate synthase 2 (trpC2) from Ralstonia nicotianae (strain ATCC BAA-1114 / GMI1000) (Ralstonia solanacearum).